Consider the following 130-residue polypeptide: Large ribosomal subunit protein bL17 (130 aa).

The protein belongs to the bacterial ribosomal protein bL17 family. In terms of assembly, part of the 50S ribosomal subunit. Contacts protein L32.

This Shewanella loihica (strain ATCC BAA-1088 / PV-4) protein is Large ribosomal subunit protein bL17.